Reading from the N-terminus, the 1366-residue chain is Collagen alpha-2(I) chain (1366 aa).

Positions 1-22 (MLSFVDTRTLLLLAVTSCLATC) are cleaved as a signal peptide. Glutamine 23 carries the pyrrolidone carboxylic acid modification. Positions 23–79 (QSLQEATARKGPTGDRGPRGERGPPGPPGRDGDDGIPGPPGPPGPPGPPGLGGNFAA) are cleaved as a propeptide — N-terminal propeptide. Positions 27–1131 (EATARKGPTG…PRSPPSLRPK (1105 aa)) are disordered. Positions 34-44 (PTGDRGPRGER) are enriched in basic and acidic residues. Pro residues predominate over residues 59 to 71 (PGPPGPPGPPGPP). Lysine 84 is modified (allysine). Residues 84–94 (KGVGLGPGPMG) are compositionally biased toward gly residues. Residues 95 to 132 (LMGPRGPPGASGAPGPQGFQGPAGEPGEPGQTGPAGAR) are compositionally biased toward low complexity. Over residues 141-155 (AGEDGHPGKPGRPGE) the composition is skewed to basic and acidic residues. Lysine 177 bears the 5-hydroxylysine; alternate mark. O-linked (Gal...) hydroxylysine; alternate glycosylation occurs at lysine 177. Low complexity-rich tracts occupy residues 225–254 (VGAP…SAGP), 279–293 (AGPR…VSGP), 300–321 (PGAN…AGAP), 330–345 (PGPV…RGIV), 384–408 (NGEA…RGLP), 423–434 (RGATGPAGVRGP), 470–489 (LPGI…RGEP), and 513–531 (AGLA…NGAQ). Over residues 538 to 547 (GVQGGKGEQG) the composition is skewed to gly residues. Low complexity predominate over residues 594–611 (PGESGAAGPSGPIGSRGP). The span at 634–643 (GASGPGGLPG) shows a compositional bias: gly residues. 2 stretches are compositionally biased toward low complexity: residues 668 to 690 (NPGR…AGAT) and 717 to 737 (VGPA…QPGA). The span at 738 to 747 (KGERGTKGPK) shows a compositional bias: basic and acidic residues. The segment covering 756-765 (TGPIGSAGPS) has biased composition (low complexity). A compositionally biased stretch (gly residues) spans 775–784 (GSRGDGGPPG). Low complexity-rich tracts occupy residues 785–795 (ATGFPGAAGRT), 863–876 (PQGL…LGLP), 893–932 (EPGP…NPGN), 951–974 (PGNI…PTGK), and 981–1001 (PGPA…PSGP). Residues 1005-1016 (RGDKGEPGEKGP) are compositionally biased toward basic and acidic residues. The span at 1089-1103 (AGPPGPPGPPGPPGP) shows a compositional bias: pro residues. Residues 1120 to 1366 (DQPRSPPSLR…RVDVGPVCFK (247 aa)) constitute a propeptide, C-terminal propeptide. The Fibrillar collagen NC1 domain maps to 1133–1366 (YEVDATLKSL…RVDVGPVCFK (234 aa)). Cystine bridges form between cysteine 1163–cysteine 1195, cysteine 1203–cysteine 1364, and cysteine 1272–cysteine 1317. Ca(2+) contacts are provided by aspartate 1181, asparagine 1183, glutamine 1184, cysteine 1186, and aspartate 1189.

The protein belongs to the fibrillar collagen family. Trimers of one alpha 2(I) and two alpha 1(I) chains. Interacts (via C-terminus) with TMEM131 (via PapD-L domain); the interaction is direct and is involved in assembly and TRAPPIII ER-to-Golgi transport complex-dependent secretion of collagen. Post-translationally, prolines at the third position of the tripeptide repeating unit (G-X-Y) are hydroxylated in some or all of the chains. In terms of tissue distribution, forms the fibrils of tendon, ligaments and bones. In bones the fibrils are mineralized with calcium hydroxyapatite.

The protein localises to the secreted. The protein resides in the extracellular space. Its subcellular location is the extracellular matrix. Type I collagen is a member of group I collagen (fibrillar forming collagen). The chain is Collagen alpha-2(I) chain (COL1A2) from Canis lupus familiaris (Dog).